Consider the following 779-residue polypeptide: Phosphoribosylformylglycinamidine synthase subunit PurL (779 aa).

His-52 is a catalytic residue. Tyr-55 and Lys-94 together coordinate ATP. Position 96 (Glu-96) interacts with Mg(2+). Substrate contacts are provided by residues 97–100 (SHNH) and Arg-119. His-98 (proton acceptor) is an active-site residue. Residue Asp-120 coordinates Mg(2+). Gln-243 serves as a coordination point for substrate. Asp-271 lines the Mg(2+) pocket. Residue 315–317 (ESQ) participates in substrate binding. ATP is bound by residues Asn-523 and Gly-560. Position 561 (Asn-561) interacts with Mg(2+). Residue Ser-563 participates in substrate binding.

This sequence belongs to the FGAMS family. As to quaternary structure, monomer. Part of the FGAM synthase complex composed of 1 PurL, 1 PurQ and 2 PurS subunits.

It localises to the cytoplasm. The catalysed reaction is N(2)-formyl-N(1)-(5-phospho-beta-D-ribosyl)glycinamide + L-glutamine + ATP + H2O = 2-formamido-N(1)-(5-O-phospho-beta-D-ribosyl)acetamidine + L-glutamate + ADP + phosphate + H(+). The protein operates within purine metabolism; IMP biosynthesis via de novo pathway; 5-amino-1-(5-phospho-D-ribosyl)imidazole from N(2)-formyl-N(1)-(5-phospho-D-ribosyl)glycinamide: step 1/2. Its function is as follows. Part of the phosphoribosylformylglycinamidine synthase complex involved in the purines biosynthetic pathway. Catalyzes the ATP-dependent conversion of formylglycinamide ribonucleotide (FGAR) and glutamine to yield formylglycinamidine ribonucleotide (FGAM) and glutamate. The FGAM synthase complex is composed of three subunits. PurQ produces an ammonia molecule by converting glutamine to glutamate. PurL transfers the ammonia molecule to FGAR to form FGAM in an ATP-dependent manner. PurS interacts with PurQ and PurL and is thought to assist in the transfer of the ammonia molecule from PurQ to PurL. The sequence is that of Phosphoribosylformylglycinamidine synthase subunit PurL from Prochlorococcus marinus (strain MIT 9215).